The following is a 241-amino-acid chain: MNFRDKAIILKKRNIKENLAIVTVLTQSYGIYSGIIKDLHSKKNTIIYQIGNIVDFCWSARLDKHLGTINCELVKSYSYLIMSNKRNLFYTHSLIELTLMSFKERELHANLFEKWLGNLESINVGNINIKNYINFELLILKEAGYQLTLDRCGVTNCTQNLIYVSPKSGQAISAAVGEPYKHKLLLLPKFLVHNNCEPEDIYEIQAAFNLTAYFFNKYVLIKKKLPIARELLLKSILAYSF.

The protein belongs to the RecO family.

In terms of biological role, involved in DNA repair and RecF pathway recombination. This is DNA repair protein RecO from Orientia tsutsugamushi (strain Boryong) (Rickettsia tsutsugamushi).